The primary structure comprises 1072 residues: Integrator complex subunit 3 homolog (1072 aa).

Disordered regions lie at residues 920–941 and 1002–1072; these read YPSS…STSI and DTTV…NDSD. Phosphoserine is present on residues Ser-1042, Ser-1043, Ser-1047, and Ser-1048.

The protein belongs to the Integrator subunit 3 family. Belongs to the multiprotein complex Integrator, at least composed of IntS1, IntS2, IntS3, IntS4, omd/IntS5, IntS6, defl/IntS7, IntS8, IntS9, IntS10, IntS11, IntS12, asun/IntS13, IntS14 and IntS15. The core complex associates with protein phosphatase 2A subunits mts/PP2A and Pp2A-29B, to form the Integrator-PP2A (INTAC) complex.

It is found in the nucleus. Its subcellular location is the cytoplasm. In terms of biological role, component of the integrator complex, a multiprotein complex that terminates RNA polymerase II (Pol II) transcription in the promoter-proximal region of genes. The integrator complex provides a quality checkpoint during transcription elongation by driving premature transcription termination of transcripts that are unfavorably configured for transcriptional elongation: the complex terminates transcription by (1) catalyzing dephosphorylation of the C-terminal domain (CTD) of Pol II subunit Polr2A/Rbp1 and Spt5, and (2) degrading the exiting nascent RNA transcript via endonuclease activity. The integrator complex is also involved in the 3'-end processing of the U7 snRNA, and also the spliceosomal snRNAs U1, U2, U4 and U5. This Drosophila erecta (Fruit fly) protein is Integrator complex subunit 3 homolog (IntS3).